The primary structure comprises 673 residues: Pesticin receptor (673 aa).

The signal sequence occupies residues 1 to 22; sequence MKMTRLYPLALGGLLLPAIANA. The short motif at 30 to 37 is the TonB box element; that stretch reads STLEVTAS. Residues 41–155 form the TBDR plug domain; sequence SRSASANNVS…QGGIINIVTQ (115 aa). The region spanning 160-672 is the TBDR beta-barrel domain; that stretch reads TPRGYIEGGV…TVGINTRIDF (513 aa). The TonB C-terminal box motif lies at 657-673; it reads QVNMGRTVGINTRIDFF.

The protein belongs to the TonB-dependent receptor family.

The protein localises to the cell outer membrane. Functionally, receptor for the bacteriocin pesticin and for the siderophore yersiniabactin. This chain is Pesticin receptor (fyuA), found in Yersinia enterocolitica.